A 388-amino-acid polypeptide reads, in one-letter code: Alanine racemase (388 aa).

The Proton acceptor; specific for D-alanine role is filled by Lys-39. N6-(pyridoxal phosphate)lysine is present on Lys-39. Lys-129 bears the N6-carboxylysine mark. Arg-136 is a binding site for substrate. Tyr-265 serves as the catalytic Proton acceptor; specific for L-alanine. A substrate-binding site is contributed by Met-312.

This sequence belongs to the alanine racemase family. In terms of assembly, homodimer. Pyridoxal 5'-phosphate serves as cofactor.

It carries out the reaction L-alanine = D-alanine. It participates in amino-acid biosynthesis; D-alanine biosynthesis; D-alanine from L-alanine: step 1/1. Its activity is regulated as follows. Inhibited by acetate and propionate. Irreversibly inhibited by cycloserine. Functionally, catalyzes the interconversion of L-alanine and D-alanine. Also weakly active on serine. In Geobacillus stearothermophilus (Bacillus stearothermophilus), this protein is Alanine racemase (alr).